Here is a 42-residue protein sequence, read N- to C-terminus: uncharacterized protein (42 aa).

This is an uncharacterized protein from Escherichia coli (Bacteriophage T4).